Consider the following 749-residue polypeptide: Meiotically up-regulated gene 122 protein (749 aa).

Residues 1-20 (MYRKWDLCITRHLLPYIEHS) lie on the Cytoplasmic side of the membrane. Residues 21-41 (VIPIIALLVLSLIFYILYICF) traverse the membrane as a helical; Signal-anchor for type II membrane protein segment. Residues 42–749 (GTTSYILSGI…LLSNALRSII (708 aa)) are Lumenal-facing. The PXA domain occupies 88-261 (PPELEAPLQL…CIILYFSSSE (174 aa)). Positions 311 to 422 (LHYQFLKEAS…KFFAKSMRSH (112 aa)) constitute a PX domain. Disordered stretches follow at residues 439–489 (QSSS…LSQQ) and 504–546 (GSCT…PPKP). Polar residues-rich tracts occupy residues 440-461 (SSSV…NKTS) and 475-489 (LSHQ…LSQQ).

It belongs to the sorting nexin family.

The protein localises to the endoplasmic reticulum membrane. Its function is as follows. Has a role in meiosis. The protein is Meiotically up-regulated gene 122 protein (mug122) of Schizosaccharomyces pombe (strain 972 / ATCC 24843) (Fission yeast).